A 657-amino-acid chain; its full sequence is Protein mono-ADP-ribosyltransferase TIPARP (657 aa).

Acidic residues predominate over residues M1–P10. A disordered region spans residues M1–D21. Residue C39 is modified to ADP-ribosylcysteine. The short motif at K41–R47 is the Nuclear localization signal element. The C3H1-type zinc-finger motif lies at E237–L264. In terms of domain architecture, WWE spans S332–I410. The PARP catalytic domain maps to Y449 to I657.

It belongs to the ARTD/PARP family. Interacts with AHR. Post-translationally, auto-mono-ADP-ribosylated.

The protein resides in the nucleus. It carries out the reaction L-aspartyl-[protein] + NAD(+) = 4-O-(ADP-D-ribosyl)-L-aspartyl-[protein] + nicotinamide. The catalysed reaction is L-glutamyl-[protein] + NAD(+) = 5-O-(ADP-D-ribosyl)-L-glutamyl-[protein] + nicotinamide. The enzyme catalyses L-cysteinyl-[protein] + NAD(+) = S-(ADP-D-ribosyl)-L-cysteinyl-[protein] + nicotinamide + H(+). With respect to regulation, ADP-ribosyltransferase activity is inhibited by PJ34; inhibition is however not specific to TIPARP and other PARP-domain containing proteins are also inhibited by PJ34. Partially inhibited by KU0058948. ADP-ribosyltransferase that mediates mono-ADP-ribosylation of glutamate, aspartate and cysteine residues on target proteins. Acts as a negative regulator of AHR by mediating mono-ADP-ribosylation of AHR, leading to inhibit transcription activator activity of AHR. The protein is Protein mono-ADP-ribosyltransferase TIPARP of Homo sapiens (Human).